Consider the following 1201-residue polypeptide: Potassium/sodium hyperpolarization-activated cyclic nucleotide-gated channel 4 (1201 aa).

The Cytoplasmic segment spans residues 1-263; sequence MDKLPPSMRK…IIHPYSDFRF (263 aa). The segment at 24 to 183 is disordered; that stretch reads WIMDEEEDGE…PASASCEQPS (160 aa). Over residues 26–36 the composition is skewed to acidic residues; the sequence is MDEEEDGEEEG. The span at 105–118 shows a compositional bias: gly residues; sequence SRGGGSGGAGGGSS. Basic and acidic residues predominate over residues 121–132; the sequence is HLHDSAEERRLI. S139 bears the Phosphoserine mark. The segment covering 164-174 has biased composition (pro residues); the sequence is ASPPPQQPPQP. An involved in subunit assembly region spans residues 209-260; sequence GQSGFMQRQFGAMLQPGVNKFSLRMFGSQKAVEREQERVKSAGFWIIHPYSD. A helical membrane pass occupies residues 264 to 286; that stretch reads YWDLTMLLLMVGNLIIIPVGITF. The Extracellular portion of the chain corresponds to 287–293; sequence FKDENTT. Residues 294 to 314 form a helical membrane-spanning segment; the sequence is PWIVFNVVSDTFFLIDLVLNF. At 315–336 the chain is on the cytoplasmic side; sequence RTGIVVEDNTEIILDPQRIKMK. A helical transmembrane segment spans residues 337–359; that stretch reads YLKSWFVVDFISSIPVDYIFLIV. Over 360 to 378 the chain is Extracellular; that stretch reads ETRIDSEVYKTARALRIVR. Residues 379 to 399 traverse the membrane as a helical; Voltage-sensor segment; sequence FTKILSLLRLLRLSRLIRYIH. Residues 400–413 are Cytoplasmic-facing; it reads QWEEIFHMTYDLAS. The chain crosses the membrane as a helical span at residues 414 to 436; that stretch reads AVVRIVNLIGMMLLLCHWDGCLQ. Over 437-464 the chain is Extracellular; sequence FLVPMLQDFPHDCWVSINGMVNNSWGKQ. N-linked (GlcNAc...) asparagine glycosylation is present at N458. Residues 465 to 486 constitute an intramembrane region (pore-forming); sequence YSYALFKAMSHMLCIGYGRQAP. The Extracellular segment spans residues 487 to 491; that stretch reads VGMSD. The chain crosses the membrane as a helical span at residues 492–517; it reads VWLTMLSMIVGATCYAMFIGHATALI. At 518 to 1201 the chain is on the cytoplasmic side; that stretch reads QSLDSSRRQY…PVRSKLPSNL (684 aa). The 3',5'-cyclic GMP site is built by Y559, K562, F564, and E566. Residues G659, E660, C662, R669, T670, V673, and R710 each contribute to the 3',5'-cyclic AMP site. 2 disordered regions span residues 804-902 and 914-1201; these read AIFR…TAAA and ALGG…PSNL. 2 stretches are compositionally biased toward low complexity: residues 831 to 856 and 866 to 880; these read SLIP…SSSS and SAPP…SSSS. The segment covering 881–894 has biased composition (pro residues); it reads SPPPGACGSPPAPT. Low complexity-rich tracts occupy residues 915 to 939 and 967 to 995; these read LGGS…SPQA and RSPS…SSTP. Residues 1029 to 1042 show a composition bias toward pro residues; that stretch reads GHSPGPPRTFPSAP. The segment covering 1045-1056 has biased composition (low complexity); sequence ASGSHGSLLLPP. Phosphoserine is present on residues S1105 and S1108. A compositionally biased stretch (gly residues) spans 1122 to 1134; the sequence is AGGGSGSSGGLGP.

The protein belongs to the potassium channel HCN family. Homotetramer. The potassium channel is composed of a homo- or heterotetrameric complex of pore-forming subunits. Interacts with PEX5L with a 4:4 HCN4:PEX5L stoichiometry; reduces the effects of cAMP on the voltage-dependence and rate of activation. Interacts with IRAG1; regulates HCN4 channel activity. Interacts with IRAG2; regulates HCN4 channel activity. Post-translationally, S-palmitoylated. As to expression, detected in a subset of elongated cells in taste buds.

It is found in the cell membrane. It carries out the reaction K(+)(in) = K(+)(out). The enzyme catalyses Na(+)(in) = Na(+)(out). Its activity is regulated as follows. Activated by cAMP, and to a lesser extent by cGMP and cCMP. cAMP binding causes a conformation change that leads to the assembly of an active tetramer and channel opening. Binding of cAMP removes a tonic inhibition conferred by cyclic nucleotide-binding domain (CNBD) on channel opening. Cyclic dinucleotides can modulate HCN4 channel; cyclic dinucleotides acting as potent antagonists of cAMP. Inhibited by extracellular Cs(+) ions. Auxiliary subunits can also regulate HCN4 channel. IRAG1 causes a gain-of-function by shifting HCN4 activation to more depolarized membrane potentials in the absence of cAMP. In contrast, IRAG2 causes a loss-of-function by inhibiting cAMP-dependent potentiation of HCN4 activation. In terms of biological role, hyperpolarization-activated ion channel that are permeable to Na(+) and K(+) ions with very slow activation and inactivation. Exhibits higher selectivity for K(+) over Na(+) ions. Contributes to the native pacemaker currents in heart (If) that regulate the rhythm of heart beat. Contributes to the native pacemaker currents in neurons (Ih). May mediate responses to sour stimuli. The protein is Potassium/sodium hyperpolarization-activated cyclic nucleotide-gated channel 4 (Hcn4) of Mus musculus (Mouse).